The primary structure comprises 212 residues: Putative 3-methyladenine DNA glycosylase (212 aa).

The protein belongs to the DNA glycosylase MPG family.

This Nocardia farcinica (strain IFM 10152) protein is Putative 3-methyladenine DNA glycosylase.